We begin with the raw amino-acid sequence, 214 residues long: GSGTPTEAQTQPQQGGAHERVDLPGNMADALSQQQGQVDAATQGMTGAASTLPTAPATVMSGAAAREATRPVQGTAPQQHKTPAKTAAAKPTATQHKSPTTVYTPPAKPSSTAKAGAVASSGSSVQSAPGSHYTLQLSSASRSDTLNAYAKQQKLQNYLVYATKRDGKPWYVLVSGNYASSAEAKRAIASLPADVQAKKPWVRPVHQVQQDLKK.

Polar residues-rich tracts occupy residues 1 to 14 and 43 to 53; these read GSGTPTEAQTQPQQ and QGMTGAASTLP. The tract at residues 1-133 is disordered; sequence GSGTPTEAQT…SVQSAPGSHY (133 aa). The chain crosses the membrane as a helical span at residues 44–65; that stretch reads GMTGAASTLPTAPATVMSGAAA. Composition is skewed to low complexity over residues 78 to 97 and 110 to 131; these read QQHKTPAKTAAAKPTATQHK and SSTAKAGAVASSGSSVQSAPGS. The SPOR domain occupies 127 to 204; the sequence is SAPGSHYTLQ…VQAKKPWVRP (78 aa).

Belongs to the DamX family.

The protein localises to the cell inner membrane. Its function is as follows. Non-essential cell division protein. In Serratia marcescens, this protein is Cell division protein DamX.